Here is a 182-residue protein sequence, read N- to C-terminus: ATP synthase subunit delta (182 aa).

This sequence belongs to the ATPase delta chain family. F-type ATPases have 2 components, F(1) - the catalytic core - and F(0) - the membrane proton channel. F(1) has five subunits: alpha(3), beta(3), gamma(1), delta(1), epsilon(1). F(0) has three main subunits: a(1), b(2) and c(10-14). The alpha and beta chains form an alternating ring which encloses part of the gamma chain. F(1) is attached to F(0) by a central stalk formed by the gamma and epsilon chains, while a peripheral stalk is formed by the delta and b chains.

The protein localises to the cell membrane. In terms of biological role, f(1)F(0) ATP synthase produces ATP from ADP in the presence of a proton or sodium gradient. F-type ATPases consist of two structural domains, F(1) containing the extramembraneous catalytic core and F(0) containing the membrane proton channel, linked together by a central stalk and a peripheral stalk. During catalysis, ATP synthesis in the catalytic domain of F(1) is coupled via a rotary mechanism of the central stalk subunits to proton translocation. Functionally, this protein is part of the stalk that links CF(0) to CF(1). It either transmits conformational changes from CF(0) to CF(1) or is implicated in proton conduction. In Desulforudis audaxviator (strain MP104C), this protein is ATP synthase subunit delta.